Here is a 260-residue protein sequence, read N- to C-terminus: MVLVRVLANLLMLQLSYAQKSSELIIGGDECNINEHRFLVALYTFRSRRFHCSGTLINEEWVLSAARCDRKNIRIQLGMHSTNVINEDVQTRVPKEKFFCLSSKTYTKWNKDIMLIRLKKPVNNSTHIAPVSLPSNPPSLGSVCRVMGWGTISATKETHPDVPYCANINILDYSVCRAAYARLPATSRTLCAGILEGGKDSCLTDSGGPLICNGQFQGIVSWGGHPCGQPRKPGLYTKVFDHLDWIKSIIAGNKDATCPP.

Residues 1 to 18 form the signal peptide; it reads MVLVRVLANLLMLQLSYA. Positions 19-24 are excised as a propeptide; sequence QKSSEL. Residues 25-251 enclose the Peptidase S1 domain; it reads IIGGDECNIN…HLDWIKSIIA (227 aa). 6 cysteine pairs are disulfide-bonded: Cys31–Cys165, Cys52–Cys68, Cys100–Cys258, Cys144–Cys212, Cys176–Cys191, and Cys202–Cys227. Asp112 acts as the Charge relay system in catalysis. N-linked (GlcNAc...) asparagine glycans are attached at residues Asn123 and Asn124. The active-site Charge relay system is Ser206.

This sequence belongs to the peptidase S1 family. Snake venom subfamily. As to expression, expressed by the venom gland.

The protein localises to the secreted. Functionally, snake venom serine protease homolog. May act in the hemostasis system of the prey. This Protobothrops jerdonii (Jerdon's pitviper) protein is Snake venom serine protease homolog.